We begin with the raw amino-acid sequence, 754 residues long: Ubiquitin carboxyl-terminal hydrolase 9 (754 aa).

Basic residues predominate over residues 1–14 (MIKRWLSVNRKKSH). The disordered stretch occupies residues 1 to 76 (MIKRWLSVNR…SKFSSQTDNL (76 aa)). The span at 42–58 (SIAKSPSAKSSTSSIPS) shows a compositional bias: low complexity. Residues 134–667 (FGYENFGNTC…TAYVLFYKET (534 aa)) form the USP domain. Residue C143 is the Nucleophile of the active site. Positions 194 to 209 (ETSTNSGNSNTGYQSN) are enriched in polar residues. The segment at 194-273 (ETSTNSGNSN…DNNEMERPQP (80 aa)) is disordered. The segment covering 222–233 (QSDQDNSSSSTQ) has biased composition (low complexity). Over residues 250-272 (GKDKSNYKDSAKKDDNNEMERPQ) the composition is skewed to basic and acidic residues. H618 functions as the Proton acceptor in the catalytic mechanism. A disordered region spans residues 726–754 (VKTAETKTPLNDKKRNKQKRKSRILSFIK). Positions 727–738 (KTAETKTPLNDK) are enriched in basic and acidic residues. The segment covering 739–748 (KRNKQKRKSR) has biased composition (basic residues).

This sequence belongs to the peptidase C19 family.

The enzyme catalyses Thiol-dependent hydrolysis of ester, thioester, amide, peptide and isopeptide bonds formed by the C-terminal Gly of ubiquitin (a 76-residue protein attached to proteins as an intracellular targeting signal).. The chain is Ubiquitin carboxyl-terminal hydrolase 9 (UBP9) from Saccharomyces cerevisiae (strain ATCC 204508 / S288c) (Baker's yeast).